Reading from the N-terminus, the 306-residue chain is Triplex capsid protein 2 (306 aa).

It belongs to the herpesviridae TRX2 protein family. In terms of assembly, interacts with TRX1 and major capisd protein/MCP.

The protein resides in the virion. It localises to the host nucleus. Structural component of the T=16 icosahedral capsid. The capsid is composed of pentamers and hexamers of major capsid protein/MCP, which are linked together by heterotrimers called triplexes. These triplexes are formed by a single molecule of triplex protein 1/TRX1 and two copies of triplex protein 2/TRX2. Additionally, TRX1 is required for efficient transport of TRX2 to the nucleus, which is the site of capsid assembly. This chain is Triplex capsid protein 2, found in Alcelaphine herpesvirus 1 (strain C500) (AlHV-1).